Here is a 178-residue protein sequence, read N- to C-terminus: uncharacterized protein (178 aa).

A signal peptide spans 1-23 (MTMFKKISVLFFTLILAGCSSWS).

This is an uncharacterized protein from Haemophilus influenzae (strain ATCC 51907 / DSM 11121 / KW20 / Rd).